The following is a 492-amino-acid chain: GTPase Der (492 aa).

2 EngA-type G domains span residues 3–166 (PVVA…VDEV) and 205–378 (IKLA…DSAT). Residues 9–16 (GRPNVGKS), 56–60 (DTGGI), 118–121 (NKTD), 211–218 (GRPNVGKS), 258–262 (DTAGV), and 323–326 (NKWD) each bind GTP. Residues 379-463 (RRVSTAMLTR…PIRIQFKEGE (85 aa)) enclose the KH-like domain.

This sequence belongs to the TRAFAC class TrmE-Era-EngA-EngB-Septin-like GTPase superfamily. EngA (Der) GTPase family. In terms of assembly, associates with the 50S ribosomal subunit.

In terms of biological role, GTPase that plays an essential role in the late steps of ribosome biogenesis. The chain is GTPase Der from Klebsiella pneumoniae subsp. pneumoniae (strain ATCC 700721 / MGH 78578).